A 417-amino-acid polypeptide reads, in one-letter code: Serine hydroxymethyltransferase (417 aa).

(6S)-5,6,7,8-tetrahydrofolate is bound by residues L119 and 123–125; that span reads GHL. Position 227 is an N6-(pyridoxal phosphate)lysine (K227).

It belongs to the SHMT family. In terms of assembly, homodimer. Pyridoxal 5'-phosphate is required as a cofactor.

Its subcellular location is the cytoplasm. It carries out the reaction (6R)-5,10-methylene-5,6,7,8-tetrahydrofolate + glycine + H2O = (6S)-5,6,7,8-tetrahydrofolate + L-serine. It participates in one-carbon metabolism; tetrahydrofolate interconversion. It functions in the pathway amino-acid biosynthesis; glycine biosynthesis; glycine from L-serine: step 1/1. Its function is as follows. Catalyzes the reversible interconversion of serine and glycine with tetrahydrofolate (THF) serving as the one-carbon carrier. This reaction serves as the major source of one-carbon groups required for the biosynthesis of purines, thymidylate, methionine, and other important biomolecules. Also exhibits THF-independent aldolase activity toward beta-hydroxyamino acids, producing glycine and aldehydes, via a retro-aldol mechanism. This is Serine hydroxymethyltransferase from Buchnera aphidicola subsp. Cinara cedri (strain Cc).